The following is a 212-amino-acid chain: Thymidylate kinase (212 aa).

11 to 18 contributes to the ATP binding site; sequence GPEGAGKT.

This sequence belongs to the thymidylate kinase family.

The enzyme catalyses dTMP + ATP = dTDP + ADP. Functionally, phosphorylation of dTMP to form dTDP in both de novo and salvage pathways of dTTP synthesis. The protein is Thymidylate kinase of Streptococcus pneumoniae (strain ATCC 700669 / Spain 23F-1).